The sequence spans 413 residues: E3 ubiquitin ligase ICP22 (413 aa).

The disordered stretch occupies residues 1–124 (MADIPPDPPA…PPRKSKRPRI (124 aa)). The span at 62 to 76 (GDLRGGRRRSPRELG) shows a compositional bias: basic and acidic residues. Residues 84 to 97 (SAESTTGTESEGTG) show a composition bias toward low complexity. Position 189 is a phosphotyrosine; by host (Tyr189). 2 disordered regions span residues 289-334 (LETN…SASG) and 370-390 (AERSGLPAPGACRATEAPERE). The segment covering 297-309 (SDDEISDATDSDD) has biased composition (acidic residues).

It belongs to the herpesviridae ICP22 family. Tyrosine phosphorylated.

The protein resides in the host nucleus. It functions in the pathway protein modification; protein ubiquitination. Functions as an E3 ubiquitin ligase and plays a role in the inhibition of innate immunity by preventing IFN-mediated signaling. Induces the ubiquitination and degradation of host STAT1, STAT2 and IRF9, resulting in the blockade of ISGF3 nuclear translocation. The chain is E3 ubiquitin ligase ICP22 from Human herpesvirus 2 (strain HG52) (HHV-2).